We begin with the raw amino-acid sequence, 191 residues long: Dirigent protein 3 (191 aa).

An N-terminal signal peptide occupies residues 1-21 (MSKLILILTAQILLLTATALA). N-linked (GlcNAc...) asparagine glycans are attached at residues Asn96 and Asn131.

Belongs to the plant dirigent protein family. Homodimer.

The protein localises to the secreted. It localises to the extracellular space. The protein resides in the apoplast. Functionally, dirigent proteins impart stereoselectivity on the phenoxy radical-coupling reaction, yielding optically active lignans from two molecules of coniferyl alcohol in the biosynthesis of lignans, flavonolignans, and alkaloids and thus plays a central role in plant secondary metabolism. The protein is Dirigent protein 3 (DIR3) of Arabidopsis thaliana (Mouse-ear cress).